The primary structure comprises 38 residues: Large ribosomal subunit protein bL36 (38 aa).

It belongs to the bacterial ribosomal protein bL36 family.

The protein is Large ribosomal subunit protein bL36 of Cupriavidus metallidurans (strain ATCC 43123 / DSM 2839 / NBRC 102507 / CH34) (Ralstonia metallidurans).